The sequence spans 715 residues: Harpin secretion protein HrpI (715 aa).

7 helical membrane passes run 23 to 43 (GAAIVMSIVFMMIIPLPTGLI), 45 to 65 (VLIALNICISSLLIVLAMYLP), 69 to 89 (AFSTFPSVLLLTTMFRLALSI), 115 to 135 (GNLAVGLVIFLILTVVNFLVI), 203 to 223 (AIAGLVIVFINMIGGFAIGVL), 241 to 261 (IGDGLIAQIPALLISLTAGMI), and 298 to 318 (MLGFALLPGMPTAVFVIISAI).

Belongs to the FHIPEP (flagella/HR/invasion proteins export pore) family.

The protein resides in the cell inner membrane. Involved in the secretion of harpin; a proteinaceous elicitor of the hypersensitivity response in plants. The protein is Harpin secretion protein HrpI (hrpI) of Erwinia amylovora (Fire blight bacteria).